A 590-amino-acid chain; its full sequence is Proline--tRNA ligase (590 aa).

It belongs to the class-II aminoacyl-tRNA synthetase family. ProS type 1 subfamily. Homodimer.

It localises to the cytoplasm. The catalysed reaction is tRNA(Pro) + L-proline + ATP = L-prolyl-tRNA(Pro) + AMP + diphosphate. Its function is as follows. Catalyzes the attachment of proline to tRNA(Pro) in a two-step reaction: proline is first activated by ATP to form Pro-AMP and then transferred to the acceptor end of tRNA(Pro). As ProRS can inadvertently accommodate and process non-cognate amino acids such as alanine and cysteine, to avoid such errors it has two additional distinct editing activities against alanine. One activity is designated as 'pretransfer' editing and involves the tRNA(Pro)-independent hydrolysis of activated Ala-AMP. The other activity is designated 'posttransfer' editing and involves deacylation of mischarged Ala-tRNA(Pro). The misacylated Cys-tRNA(Pro) is not edited by ProRS. This chain is Proline--tRNA ligase, found in Clavibacter sepedonicus (Clavibacter michiganensis subsp. sepedonicus).